The sequence spans 131 residues: Small ribosomal subunit protein uS8 (131 aa).

The protein belongs to the universal ribosomal protein uS8 family. In terms of assembly, part of the 30S ribosomal subunit. Contacts proteins S5 and S12.

One of the primary rRNA binding proteins, it binds directly to 16S rRNA central domain where it helps coordinate assembly of the platform of the 30S subunit. This Rhizorhabdus wittichii (strain DSM 6014 / CCUG 31198 / JCM 15750 / NBRC 105917 / EY 4224 / RW1) (Sphingomonas wittichii) protein is Small ribosomal subunit protein uS8.